A 197-amino-acid polypeptide reads, in one-letter code: MVNKDIVWHEASITKREYHEKNQHKSSIIWLTGLSGSGKSTIANAAARELFAQGYQVTVLDGDNVRHGLNKDLGFSDEDRKENIRRIGEVAKLFVEQGTIVITAFISPFKEDRGLVRQLVEEDEFHEVYVKCDLATCEERDPKGLYKKARNGEIPFFTGIDSPYEEPETPELVLDTGAHNREECKNQLVQYVKDQTK.

33-40 (GLSGSGKS) is an ATP binding site. The active-site Phosphoserine intermediate is the Ser-107.

It belongs to the APS kinase family.

It catalyses the reaction adenosine 5'-phosphosulfate + ATP = 3'-phosphoadenylyl sulfate + ADP + H(+). It participates in sulfur metabolism; hydrogen sulfide biosynthesis; sulfite from sulfate: step 2/3. Functionally, catalyzes the synthesis of activated sulfate. The polypeptide is Adenylyl-sulfate kinase (Bacillus licheniformis (strain ATCC 14580 / DSM 13 / JCM 2505 / CCUG 7422 / NBRC 12200 / NCIMB 9375 / NCTC 10341 / NRRL NRS-1264 / Gibson 46)).